The primary structure comprises 620 residues: 1-deoxy-D-xylulose-5-phosphate synthase (620 aa).

Thiamine diphosphate is bound by residues His80 and 121 to 123; that span reads GHS. Position 152 (Asp152) interacts with Mg(2+). Thiamine diphosphate contacts are provided by residues 153–154, Asn181, Tyr288, and Glu370; that span reads GA. Asn181 lines the Mg(2+) pocket.

The protein belongs to the transketolase family. DXPS subfamily. Homodimer. Requires Mg(2+) as cofactor. Thiamine diphosphate is required as a cofactor.

The enzyme catalyses D-glyceraldehyde 3-phosphate + pyruvate + H(+) = 1-deoxy-D-xylulose 5-phosphate + CO2. It participates in metabolic intermediate biosynthesis; 1-deoxy-D-xylulose 5-phosphate biosynthesis; 1-deoxy-D-xylulose 5-phosphate from D-glyceraldehyde 3-phosphate and pyruvate: step 1/1. Its function is as follows. Catalyzes the acyloin condensation reaction between C atoms 2 and 3 of pyruvate and glyceraldehyde 3-phosphate to yield 1-deoxy-D-xylulose-5-phosphate (DXP). The protein is 1-deoxy-D-xylulose-5-phosphate synthase of Sodalis glossinidius (strain morsitans).